Reading from the N-terminus, the 181-residue chain is Akirin-2 (181 aa).

A disordered region spans residues 18–48 (SPAASPKRRRCAPLSPSGPSPQKYLRLEPSP). The Nuclear localization signal motif lies at 23 to 28 (PKRRRC). Positions 178–181 (SYVS) match the SYVS motif motif.

Belongs to the akirin family. In terms of assembly, homodimer. Interacts with actl6a/baf53a. Interacts with gmnn.

Its subcellular location is the nucleus. Molecular adapter that acts as a bridge between a variety of multiprotein complexes, and which is involved in embryonic development, immunity, myogenesis and brain development. Plays a key role in nuclear protein degradation by promoting import of proteasomes into the nucleus: acts by bridging fully assembled 20S proteasomes with nuclear import receptor ipo9. Involved in both neural precursor maintenance and terminal neural differentiation: bridges gmnn and actl6a/baf53a in neural progenitor cells, antagonizing the activity of gmnn, thereby suppressing sox2 expression. Also required for proper activation of neurod1 and neuronal differentiation. Involved in myogenesis: required for skeletal muscle formation and skeletal development, possibly by regulating expression of muscle differentiation factors. The polypeptide is Akirin-2 (Xenopus laevis (African clawed frog)).